Here is a 247-residue protein sequence, read N- to C-terminus: ATP synthase subunit a, chloroplastic (247 aa).

The next 5 helical transmembrane spans lie at Gln38–Val58, Val95–Leu115, Ile134–Thr154, Leu199–Leu219, and Gly220–Gly240.

This sequence belongs to the ATPase A chain family. F-type ATPases have 2 components, CF(1) - the catalytic core - and CF(0) - the membrane proton channel. CF(1) has five subunits: alpha(3), beta(3), gamma(1), delta(1), epsilon(1). CF(0) has four main subunits: a, b, b' and c.

It is found in the plastid. Its subcellular location is the chloroplast thylakoid membrane. Its function is as follows. Key component of the proton channel; it plays a direct role in the translocation of protons across the membrane. This chain is ATP synthase subunit a, chloroplastic, found in Nicotiana sylvestris (Wood tobacco).